A 433-amino-acid polypeptide reads, in one-letter code: Histidine--tRNA ligase (433 aa).

It belongs to the class-II aminoacyl-tRNA synthetase family. In terms of assembly, homodimer.

The protein resides in the cytoplasm. The enzyme catalyses tRNA(His) + L-histidine + ATP = L-histidyl-tRNA(His) + AMP + diphosphate + H(+). In Azoarcus sp. (strain BH72), this protein is Histidine--tRNA ligase.